The primary structure comprises 199 residues: MARMRQPRFKTCRRLGINVCGHPKAMKRADNGQVRDKRKLSSYGIQLLEKQRLRAYYEVMEKQFKIYVKAAIKDSETTGNSLIKKLECRLDNLVYRTGFGSSIRQARQMVVHGHILVNGKKVDRPSFAVSVGDDISLREKSRKNKIFIDNFLRNVDFSYPYIAKNEAGFSGQLIRMPERHEAPIEVNDHLVVEFYSKTI.

The region spanning 88 to 151 (CRLDNLVYRT…RKNKIFIDNF (64 aa)) is the S4 RNA-binding domain.

The protein belongs to the universal ribosomal protein uS4 family. In terms of assembly, part of the 30S ribosomal subunit. Contacts protein S5. The interaction surface between S4 and S5 is involved in control of translational fidelity.

One of the primary rRNA binding proteins, it binds directly to 16S rRNA where it nucleates assembly of the body of the 30S subunit. Functionally, with S5 and S12 plays an important role in translational accuracy. The protein is Small ribosomal subunit protein uS4B of Alkaliphilus metalliredigens (strain QYMF).